Consider the following 1073-residue polypeptide: Carbamoyl phosphate synthase large chain (1073 aa).

Positions 2-403 (PKRTDIKSIL…SLQKALRGLE (402 aa)) are carboxyphosphate synthetic domain. 12 residues coordinate ATP: R129, R169, G175, G176, E208, L210, E215, G241, I242, H243, Q285, and E299. An ATP-grasp 1 domain is found at 133–328 (DVAMKKIGLE…IAKVAAKLAV (196 aa)). 3 residues coordinate Mg(2+): Q285, E299, and N301. 3 residues coordinate Mn(2+): Q285, E299, and N301. The segment at 404–553 (VGATGFDPKV…YSTYEEECEA (150 aa)) is oligomerization domain. Positions 554–936 (NPSTDREKIM…AFAKAQLGSN (383 aa)) are carbamoyl phosphate synthetic domain. The 192-residue stretch at 679-870 (QHAVERLKLK…LAKVAARVMA (192 aa)) folds into the ATP-grasp 2 domain. ATP-binding residues include R715, H754, L756, E761, G786, V787, H788, S789, Q829, and E841. Q829, E841, and N843 together coordinate Mg(2+). Residues Q829, E841, and N843 each coordinate Mn(2+). Positions 937–1073 (STMKKHGRAL…SVQEMHAQIK (137 aa)) constitute an MGS-like domain. An allosteric domain region spans residues 937–1073 (STMKKHGRAL…SVQEMHAQIK (137 aa)).

The protein belongs to the CarB family. In terms of assembly, composed of two chains; the small (or glutamine) chain promotes the hydrolysis of glutamine to ammonia, which is used by the large (or ammonia) chain to synthesize carbamoyl phosphate. Tetramer of heterodimers (alpha,beta)4. Requires Mg(2+) as cofactor. Mn(2+) serves as cofactor.

The enzyme catalyses hydrogencarbonate + L-glutamine + 2 ATP + H2O = carbamoyl phosphate + L-glutamate + 2 ADP + phosphate + 2 H(+). The catalysed reaction is hydrogencarbonate + NH4(+) + 2 ATP = carbamoyl phosphate + 2 ADP + phosphate + 2 H(+). The protein operates within amino-acid biosynthesis; L-arginine biosynthesis; carbamoyl phosphate from bicarbonate: step 1/1. It participates in pyrimidine metabolism; UMP biosynthesis via de novo pathway; (S)-dihydroorotate from bicarbonate: step 1/3. Functionally, large subunit of the glutamine-dependent carbamoyl phosphate synthetase (CPSase). CPSase catalyzes the formation of carbamoyl phosphate from the ammonia moiety of glutamine, carbonate, and phosphate donated by ATP, constituting the first step of 2 biosynthetic pathways, one leading to arginine and/or urea and the other to pyrimidine nucleotides. The large subunit (synthetase) binds the substrates ammonia (free or transferred from glutamine from the small subunit), hydrogencarbonate and ATP and carries out an ATP-coupled ligase reaction, activating hydrogencarbonate by forming carboxy phosphate which reacts with ammonia to form carbamoyl phosphate. In Escherichia coli (strain K12), this protein is Carbamoyl phosphate synthase large chain.